The primary structure comprises 265 residues: Indole-3-glycerol phosphate synthase (265 aa).

It belongs to the TrpC family.

It carries out the reaction 1-(2-carboxyphenylamino)-1-deoxy-D-ribulose 5-phosphate + H(+) = (1S,2R)-1-C-(indol-3-yl)glycerol 3-phosphate + CO2 + H2O. The protein operates within amino-acid biosynthesis; L-tryptophan biosynthesis; L-tryptophan from chorismate: step 4/5. This is Indole-3-glycerol phosphate synthase from Xanthomonas euvesicatoria pv. vesicatoria (strain 85-10) (Xanthomonas campestris pv. vesicatoria).